Consider the following 315-residue polypeptide: MSTPGAQQVLFRTGIAAVNLTNHLRVYFQDVYGSIRESLYEGSWANGTEKNVIGNAKLGSPVAATSKELKHIRVYTLTEGNTLQEFAYDSGTGWYNGGLGGAKFQVAPYSRIAAVFLAGTDALQLRIYAQKPDNTIQEYMWNGDGWKEGTNLGGALPGTGIGATSFRYTDYNGPSIRIWFQTDDLKLVQRAYDPHKGWYPDLVTIFDRAPPRTAIAATSFGAGNSSIYMRIYFVNSDNTIWQVCWDHGKGYHDKGTITPVIQGSEVAIISWGSFANNGPDLRLYFQNGTYISAVSEWVWNRAHGSQLGRSALPPA.

6 tandem repeats follow at residues 2-53, 54-103, 104-155, 156-207, 208-260, and 261-315. A 6 X approximate tandem repeats region spans residues 2–315; sequence STPGAQQVLF…QLGRSALPPA (314 aa). Arginine 25, glutamate 37, tryptophan 44, arginine 73, glutamate 85, tryptophan 94, glycine 98, arginine 126, glutamate 138, tryptophan 146, threonine 150, arginine 177, glutamine 189, tryptophan 198, arginine 230, and glutamine 242 together coordinate alpha-L-fucose. 3 residues coordinate Zn(2+): cysteine 244, aspartate 246, and histidine 252. Alpha-L-fucose is bound by residues arginine 282 and glutamate 296.

Belongs to the fungal fucose-specific lectin family. As to quaternary structure, homodimer.

In terms of biological role, multispecific lectin that is able to recognize L-fucose in all possible linkages. These could be found not only in decomposed plant matter in soil, which is the natural environment for A.fumigatus, but also in various epitopes on human tissues. Mediates binding of A.fumigatus conidia to airway mucin in a fucose dependent manner. Stimulates IL-8 production by human bronchial cells in a dose-dependent manner, contributing to the inflammatory response observed upon the exposure of a patient to A.fumigatus, and thus might be an important virulence factor involved in an early stage of A.fumigatus infection. In Aspergillus fumigatus (strain ATCC MYA-4609 / CBS 101355 / FGSC A1100 / Af293) (Neosartorya fumigata), this protein is Fucose-specific lectin.